A 286-amino-acid polypeptide reads, in one-letter code: Urease accessory protein UreD 2 (286 aa).

Belongs to the UreD family. UreD, UreF and UreG form a complex that acts as a GTP-hydrolysis-dependent molecular chaperone, activating the urease apoprotein by helping to assemble the nickel containing metallocenter of UreC. The UreE protein probably delivers the nickel.

Its subcellular location is the cytoplasm. Its function is as follows. Required for maturation of urease via the functional incorporation of the urease nickel metallocenter. The protein is Urease accessory protein UreD 2 of Bradyrhizobium sp. (strain BTAi1 / ATCC BAA-1182).